The primary structure comprises 203 residues: MNGFLVCQRGNFLKWYGTSSFSRTANRGVHISAEARINERIRVPEVRLVGPNGEQVGIVRIEDARKLAFDADLDLVEVAPTAKPPVCKIMDYGKFKYEAAQKARESRKNQQQTVVKEQKLRPKIDDHDYETKKSNVIRFLEKGSKVKVTIMFRGREQARPELGYRLLERLANDVAEYGVVETRAKQDGRNMTMVIGPLRKGKK.

Belongs to the IF-3 family. Monomer.

Its subcellular location is the cytoplasm. Its function is as follows. IF-3 binds to the 30S ribosomal subunit and shifts the equilibrium between 70S ribosomes and their 50S and 30S subunits in favor of the free subunits, thus enhancing the availability of 30S subunits on which protein synthesis initiation begins. In Corynebacterium efficiens (strain DSM 44549 / YS-314 / AJ 12310 / JCM 11189 / NBRC 100395), this protein is Translation initiation factor IF-3.